Here is a 200-residue protein sequence, read N- to C-terminus: Large ribosomal subunit protein bL25 (200 aa).

Disordered regions lie at residues 1–20 (MTIEFNATKREGQGSSASRR) and 179–200 (PVVASAQTTRGAAAAEGEGEAA).

It belongs to the bacterial ribosomal protein bL25 family. CTC subfamily. As to quaternary structure, part of the 50S ribosomal subunit; part of the 5S rRNA/L5/L18/L25 subcomplex. Contacts the 5S rRNA. Binds to the 5S rRNA independently of L5 and L18.

Functionally, this is one of the proteins that binds to the 5S RNA in the ribosome where it forms part of the central protuberance. This chain is Large ribosomal subunit protein bL25, found in Azoarcus sp. (strain BH72).